Consider the following 3680-residue polypeptide: Dystrophin (3680 aa).

The interval 1–237 (MLWWEEVEDC…ILMYITSLFQ (237 aa)) is actin-binding. 2 consecutive Calponin-homology (CH) domains span residues 15–119 (DVQK…LHWQ) and 134–240 (TNSE…QVLP). Residues 63–72 (PKEKGSTRVH) form an ANK2- and ANK-3 binding region. The span at 310-323 (TSDPTRSPLPSQHL) shows a compositional bias: polar residues. The tract at residues 310 to 332 (TSDPTRSPLPSQHLETPEDKSFG) is disordered. Spectrin repeat units lie at residues 340–448 (ANLD…NLHK), 449–557 (VLMD…LLQD), 560–668 (LKWQ…QISQ), 720–829 (EIRK…WLEY), 831–935 (NNII…ELQT), 944–1047 (RYQE…KLEE), 1050–1156 (AKLR…ALKG), 1159–1265 (DKTV…TLEE), 1268–1369 (ACWH…LLEQ), 1370–1465 (SIQS…LFQK), 1470–1570 (EQRL…QLEK), 1573–1678 (KLSR…LLLE), 1681–1780 (KHME…KASI), 1781–1876 (PLKE…KALE), 1879–1981 (HQWY…TVHE), 1994–2103 (EISY…RFDR), 2106–2210 (EKWR…RLEE), 2213–2320 (NILS…EIEA), 2321–2418 (HVKD…LRAK), 2470–2572 (FNRA…QLTE), 2575–2681 (KDST…ALEE), 2684–2797 (RLLQ…HLEA), 2803–2925 (KRLH…RKID), and 2930–3035 (RLQE…QLHE). The interaction with SYNM stretch occupies residues 1418–1915 (DLTSHEISLE…PEPRDERKIK (498 aa)). The WW domain maps to 3050–3083 (TSVQGPWERAISPNKVPYYINHETQTTCWDHPKM). The tract at residues 3053-3403 (QGPWERAISP…TVLEGDNMET (351 aa)) is interaction with SYNM. The segment at 3303 to 3359 (KHQAKCNICKECPIIGFRYRSLKHFNYDICQSCFFSGRVAKGHKMHYPMVEYCTPTT) adopts a ZZ-type; degenerate zinc-finger fold. 4 residues coordinate Zn(2+): C3308, C3311, C3332, and C3335. The segment at 3461–3513 (DDEHLLIQHYWRSLNQESPLSQPRSPAQILISLESEERGELERILADLEGRNR) is binds to SNTB1. Phosphoserine occurs at positions 3478, 3485, and 3495. 2 disordered regions span residues 3524–3549 (QQHEHKGLSPLPSPPEMMPTSPQSPR) and 3595–3680 (PQAE…EDTM). Composition is skewed to polar residues over residues 3602 to 3621 (NGTTVSSPSTSLQRSDSSQP) and 3658 to 3668 (LNHSFPSSRGR). A phosphoserine mark is found at S3607, S3608, S3612, S3618, S3619, and S3661.

In terms of assembly, interacts with SYNM. Interacts with the syntrophins SNTG1 and SNTG2. Interacts with KRT19. Component of the dystrophin-associated glycoprotein complex which is composed of three subcomplexes: a cytoplasmic complex comprised of DMD (or UTRN), DTNA and a number of syntrophins, such as SNTB1, SNTB2, SNTG1 and SNTG2, the transmembrane dystroglycan complex, and the sarcoglycan-sarcospan complex. Interacts with DAG1 (betaDAG1) with DMD; the interaction is inhibited by phosphorylation on the PPXY motif of DAG1. Interacts with SYNM; SNTA1 and SNTB1. Interacts with CMYA5. Directly interacts with ANK2 and ANK3; these interactions do not interfere with betaDAG1-binding and are necessary for proper localization in muscle cells. Identified in a dystroglycan complex that contains at least PRX, DRP2, UTRN, DMD and DAG1. Interacts with DTNB. Interacts with PGM5; the interaction is direct. Interacts with NOS1; localizes NOS1 to sarcolemma in muscle cells.

Its subcellular location is the cell membrane. The protein resides in the sarcolemma. It is found in the cytoplasm. It localises to the cytoskeleton. The protein localises to the postsynaptic cell membrane. Functionally, anchors the extracellular matrix to the cytoskeleton via F-actin. Ligand for dystroglycan. Component of the dystrophin-associated glycoprotein complex which accumulates at the neuromuscular junction (NMJ) and at a variety of synapses in the peripheral and central nervous systems and has a structural function in stabilizing the sarcolemma. Also implicated in signaling events and synaptic transmission. The chain is Dystrophin (DMD) from Canis lupus familiaris (Dog).